The following is a 31-amino-acid chain: Ranatuerin-2Ca (31 aa).

Residues cysteine 24 and cysteine 29 are joined by a disulfide bond.

Expressed by the skin glands.

It is found in the secreted. Antibacterial activity against Gram-positive bacterium S.aureus and Gram-negative bacterium E.coli. Has activity against C.albicans. This Lithobates clamitans (Green frog) protein is Ranatuerin-2Ca.